We begin with the raw amino-acid sequence, 585 residues long: Butyrophilin subfamily 3 member A3 (585 aa).

The signal sequence occupies residues 1 to 29 (MKMASSLACLLLNFHVSVFLVQLLTPCSA). Ig-like V-type domains lie at 30-139 (QFSV…KALV) and 145-236 (ALGS…ASIS). Residues 30–248 (QFSVLGPSGP…DPFFTSAQPW (219 aa)) lie on the Extracellular side of the membrane. Disulfide bonds link C52/C126 and C166/C220. The N-linked (GlcNAc...) asparagine glycan is linked to N115. The helical transmembrane segment at 249–269 (IAALAGTLPISLLLLAGASYF) threads the bilayer. Residues 270 to 585 (LWRQQKEKIA…KPQACTEALY (316 aa)) lie on the Cytoplasmic side of the membrane. The B30.2/SPRY domain maps to 322-518 (RGEKSLAYHE…LTICPTPKEV (197 aa)). A disordered region spans residues 560 to 585 (AGAEGVSPSTTTSQNHKPQACTEALY). Residues 566–576 (SPSTTTSQNHK) show a composition bias toward polar residues.

It belongs to the immunoglobulin superfamily. BTN/MOG family.

The protein resides in the membrane. In Pongo abelii (Sumatran orangutan), this protein is Butyrophilin subfamily 3 member A3 (BTN3A3).